Here is an 83-residue protein sequence, read N- to C-terminus: Cytochrome b559 subunit alpha (83 aa).

The chain crosses the membrane as a helical span at residues 21–35; it reads VIHSITIPSLFIAGW. Heme is bound at residue histidine 23.

It belongs to the PsbE/PsbF family. Heterodimer of an alpha subunit and a beta subunit. PSII is composed of 1 copy each of membrane proteins PsbA, PsbB, PsbC, PsbD, PsbE, PsbF, PsbH, PsbI, PsbJ, PsbK, PsbL, PsbM, PsbT, PsbX, PsbY, PsbZ, Psb30/Ycf12, at least 3 peripheral proteins of the oxygen-evolving complex and a large number of cofactors. It forms dimeric complexes. It depends on heme b as a cofactor.

The protein localises to the plastid. It localises to the chloroplast thylakoid membrane. This b-type cytochrome is tightly associated with the reaction center of photosystem II (PSII). PSII is a light-driven water:plastoquinone oxidoreductase that uses light energy to abstract electrons from H(2)O, generating O(2) and a proton gradient subsequently used for ATP formation. It consists of a core antenna complex that captures photons, and an electron transfer chain that converts photonic excitation into a charge separation. The chain is Cytochrome b559 subunit alpha from Amborella trichopoda.